The chain runs to 363 residues: UDP-N-acetylenolpyruvoylglucosamine reductase (363 aa).

Positions 27 to 197 constitute an FAD-binding PCMH-type domain; that stretch reads LGGWATRVVT…LSVDFRLARS (171 aa). Residue arginine 175 is part of the active site. Serine 252 serves as the catalytic Proton donor. Glutamate 355 is an active-site residue.

Belongs to the MurB family. The cofactor is FAD.

It is found in the cytoplasm. The catalysed reaction is UDP-N-acetyl-alpha-D-muramate + NADP(+) = UDP-N-acetyl-3-O-(1-carboxyvinyl)-alpha-D-glucosamine + NADPH + H(+). It participates in cell wall biogenesis; peptidoglycan biosynthesis. Functionally, cell wall formation. The protein is UDP-N-acetylenolpyruvoylglucosamine reductase of Salinispora arenicola (strain CNS-205).